The sequence spans 581 residues: MKSHTQSLLAESLNALKQQGIVPADFEARIQVDRTKDKSHGDFATNLAMMLTKAAGKNPRELAQLLIDNLPESSHVEKVEIAGPGFINFFIDDNALANQLMAALNSDTLGIELPASQTVVVDYSSPNLAKEMHVGHLRSTIIGDSVVRALEFMGHKVIRQNHVGDWGTQFGMLLAYMEELRAANGEQAKMELSDLETFYRAAKVRFDESEEFATRARKLVVALQSGDEYCNKLWREFNDISLSHCHELYERLGVSLTRADVRGESAYNSDLAQVVADLDSQGLLSESNGAKVVFQDEFKNKEGEPLPVIIQKADGGYLYATSDLAAMRYRSNVLNADRALYFVDLRQALHFQQVFKLAKTAKFVREEMSFEHMGFGTMNGEDGRPFKTRSGGVVKLIDLLKEADIRALDLVRSKNPDMDEAELAEIARVVGIASVKYADLSKNRASDYIFSFEQMLSFEGNTAPYLLYAYTRVAGIFKRAQDVDLSDAKIILEHEKEKDLGTKLAQFGEVMARMVSKGQPHALCGYLFELAGAFSSFYEACPVLAAETEELKKSRLLLSQLTAKTLKQGLNLLGLETLERM.

A 'HIGH' region motif is present at residues P126–H136.

Belongs to the class-I aminoacyl-tRNA synthetase family. Monomer.

It localises to the cytoplasm. The catalysed reaction is tRNA(Arg) + L-arginine + ATP = L-arginyl-tRNA(Arg) + AMP + diphosphate. This is Arginine--tRNA ligase from Shewanella pealeana (strain ATCC 700345 / ANG-SQ1).